The following is a 310-amino-acid chain: Methionyl-tRNA formyltransferase (310 aa).

Residue 109-112 (SLLP) coordinates (6S)-5,6,7,8-tetrahydrofolate.

The protein belongs to the Fmt family.

The enzyme catalyses L-methionyl-tRNA(fMet) + (6R)-10-formyltetrahydrofolate = N-formyl-L-methionyl-tRNA(fMet) + (6S)-5,6,7,8-tetrahydrofolate + H(+). Attaches a formyl group to the free amino group of methionyl-tRNA(fMet). The formyl group appears to play a dual role in the initiator identity of N-formylmethionyl-tRNA by promoting its recognition by IF2 and preventing the misappropriation of this tRNA by the elongation apparatus. The polypeptide is Methionyl-tRNA formyltransferase (Parvibaculum lavamentivorans (strain DS-1 / DSM 13023 / NCIMB 13966)).